The primary structure comprises 95 residues: Large ribosomal subunit protein uL23 (95 aa).

This sequence belongs to the universal ribosomal protein uL23 family. In terms of assembly, part of the 50S ribosomal subunit. Contacts protein L29, and trigger factor when it is bound to the ribosome.

In terms of biological role, one of the early assembly proteins it binds 23S rRNA. One of the proteins that surrounds the polypeptide exit tunnel on the outside of the ribosome. Forms the main docking site for trigger factor binding to the ribosome. This is Large ribosomal subunit protein uL23 from Solibacter usitatus (strain Ellin6076).